A 126-amino-acid chain; its full sequence is Small ribosomal subunit protein uS13 (126 aa).

The disordered stretch occupies residues 95–126; that stretch reads GLPVRGQRTHTNARTRKGPRKTVAGKKKPGKK.

It belongs to the universal ribosomal protein uS13 family. As to quaternary structure, part of the 30S ribosomal subunit. Forms a loose heterodimer with protein S19. Forms two bridges to the 50S subunit in the 70S ribosome.

In terms of biological role, located at the top of the head of the 30S subunit, it contacts several helices of the 16S rRNA. In the 70S ribosome it contacts the 23S rRNA (bridge B1a) and protein L5 of the 50S subunit (bridge B1b), connecting the 2 subunits; these bridges are implicated in subunit movement. Contacts the tRNAs in the A and P-sites. The protein is Small ribosomal subunit protein uS13 of Acidothermus cellulolyticus (strain ATCC 43068 / DSM 8971 / 11B).